A 615-amino-acid polypeptide reads, in one-letter code: Homologous recombination OB-fold protein (615 aa).

Disordered regions lie at residues 42-75 (LRPV…PRLC), 213-326 (PWPS…PVTQ), and 546-590 (DFLE…FPEE). The residue at position 47 (serine 47) is a Phosphoserine. Polar residues-rich tracts occupy residues 47 to 71 (SRPQ…NQSV), 232 to 241 (SCVSTSQQRG), and 257 to 275 (IRSS…SPRA). A compositionally biased stretch (low complexity) spans 302–317 (SSRAPVSSVESPVSTP).

As to quaternary structure, interacts with MCM8; this interaction is necessary for MCM8-MCM9 helicase complex recruitment to DNA damage sites. Interacts with RPA1; this interaction associates HROB with the RPA complex.

Its subcellular location is the nucleus. It is found in the chromosome. Its function is as follows. DNA-binding protein involved in homologous recombination that acts by recruiting the MCM8-MCM9 helicase complex to sites of DNA damage to promote DNA repair synthesis. This Mus musculus (Mouse) protein is Homologous recombination OB-fold protein.